A 359-amino-acid polypeptide reads, in one-letter code: Outer membrane protein assembly factor BamC (359 aa).

Residues 1 to 34 form the signal peptide; that stretch reads MASLFDKNSFQMTRLQKTAVAKVVGVSLIMLLAA. The N-palmitoyl cysteine moiety is linked to residue cysteine 35. A lipid anchor (S-diacylglycerol cysteine) is attached at cysteine 35.

This sequence belongs to the BamC family. In terms of assembly, part of the Bam complex, which is composed of the outer membrane protein BamA, and four lipoproteins BamB, BamC, BamD and BamE.

The protein resides in the cell outer membrane. Its function is as follows. Part of the outer membrane protein assembly complex, which is involved in assembly and insertion of beta-barrel proteins into the outer membrane. The sequence is that of Outer membrane protein assembly factor BamC from Rahnella sp. (strain Y9602).